We begin with the raw amino-acid sequence, 1040 residues long: Multidrug resistance protein MdtB (1040 aa).

The next 12 membrane-spanning stretches (helical) occupy residues 25–45, 347–367, 369–389, 396–416, 440–460, 472–492, 537–557, 863–883, 888–908, 910–930, 968–988, and 998–1018; these read LLMAAILLAGIIGYRFLPVAA, LMLAIALVVMIIYLFLRNIPA, IIPGVAVPLSLIGTFAVMVFL, LTLMALTIATGFVVDDAIVVI, IGFTIISLTFSLIAVLIPLLF, FAVTLAVAILISAVVSLTLTP, WLTLSVAFATLLLSIMLWIVI, LGSTVWLIVAAVVAMYIVLGV, FIHPITILSTLPTAGVGALLA, IIAGSELDIIAIIGIILLIGI, ILMTTLAALLGALPLMLSTGV, and IAMVGGLLVSQVLTLFTTPVI.

The protein belongs to the resistance-nodulation-cell division (RND) (TC 2.A.6) family. MdtB subfamily. As to quaternary structure, part of a tripartite efflux system composed of MdtA, MdtB and MdtC. MdtB forms a heteromultimer with MdtC.

Its subcellular location is the cell inner membrane. The polypeptide is Multidrug resistance protein MdtB (Salmonella newport (strain SL254)).